The chain runs to 226 residues: Leucyl/phenylalanyl-tRNA--protein transferase (226 aa).

Belongs to the L/F-transferase family.

It is found in the cytoplasm. The catalysed reaction is N-terminal L-lysyl-[protein] + L-leucyl-tRNA(Leu) = N-terminal L-leucyl-L-lysyl-[protein] + tRNA(Leu) + H(+). It catalyses the reaction N-terminal L-arginyl-[protein] + L-leucyl-tRNA(Leu) = N-terminal L-leucyl-L-arginyl-[protein] + tRNA(Leu) + H(+). The enzyme catalyses L-phenylalanyl-tRNA(Phe) + an N-terminal L-alpha-aminoacyl-[protein] = an N-terminal L-phenylalanyl-L-alpha-aminoacyl-[protein] + tRNA(Phe). Its function is as follows. Functions in the N-end rule pathway of protein degradation where it conjugates Leu, Phe and, less efficiently, Met from aminoacyl-tRNAs to the N-termini of proteins containing an N-terminal arginine or lysine. This chain is Leucyl/phenylalanyl-tRNA--protein transferase, found in Bradyrhizobium sp. (strain ORS 278).